The sequence spans 749 residues: Protein SWAP (749 aa).

The interval 8 to 124 is dry CEEERYL; it reads SNVHVQEYKD…RNDQRNAIGF (117 aa). Over residues 105–118 the composition is skewed to basic and acidic residues; it reads EQEKEEEEKRRNDQ. The disordered stretch occupies residues 105-149; sequence EQEKEEEEKRRNDQRNAIGFDYGTGKVKARESDSEDEPFEPPEGI. Residues 166–209 form an SURP motif 1 repeat; sequence IIEKTASFIVANGTQMEIVIKAKQRNNAEQFGFLEFDHRLNPFY. The segment at 256-310 is disordered; sequence HGSDSEDSDSDYELHPSLLSGGAKRPVTPEKPGAIGPRKKPVEPEKPPDFTLKPV. The stretch at 391–431 is one SURP motif 2 repeat; that stretch reads ILNSYAEHVAQRGLEAEASLAAREDLQLHFMEPKSPYYSYY. Positions 458-478 are enriched in low complexity; that stretch reads PAPPSAVSSPGPSSLMSLNLS. 3 disordered regions span residues 458 to 498, 537 to 592, and 608 to 749; these read PAPP…SSRL, LRND…QVDR, and KAKK…DRRR. Over residues 538 to 552 the composition is skewed to basic and acidic residues; the sequence is RNDEPRDESSFRFDP. Residues 560–569 show a composition bias toward polar residues; it reads PSDTTANFSD. Residues 574–583 show a composition bias toward pro residues; sequence FPPPTPPVIP. 2 stretches are compositionally biased toward basic and acidic residues: residues 608-659 and 679-689; these read KAKK…RSLD and EEMKRTDEDRE. Basic residues-rich tracts occupy residues 690-704 and 714-749; these read RKRH…RRSR and EHKK…DRRR.

Its function is as follows. It is a regulator of pre-mRNA splicing (and, possibly, of other RNA processing events). It may regulate its own expression at the level of RNA processing. This is Protein SWAP (swp-1) from Caenorhabditis elegans.